Consider the following 122-residue polypeptide: Large ribosomal subunit protein uL18 (122 aa).

It belongs to the universal ribosomal protein uL18 family. Part of the 50S ribosomal subunit; part of the 5S rRNA/L5/L18/L25 subcomplex. Contacts the 5S and 23S rRNAs.

This is one of the proteins that bind and probably mediate the attachment of the 5S RNA into the large ribosomal subunit, where it forms part of the central protuberance. The protein is Large ribosomal subunit protein uL18 of Kosmotoga olearia (strain ATCC BAA-1733 / DSM 21960 / TBF 19.5.1).